Reading from the N-terminus, the 491-residue chain is 2,3-bisphosphoglycerate-independent phosphoglycerate mutase (491 aa).

Asp-11 and Ser-61 together coordinate Mn(2+). Ser-61 acts as the Phosphoserine intermediate in catalysis. Residues His-118, 147–148 (RD), Arg-177, Arg-183, 247–250 (RNDR), and Lys-320 contribute to the substrate site. The Mn(2+) site is built by Asp-386, His-390, Asp-427, His-428, and His-445.

This sequence belongs to the BPG-independent phosphoglycerate mutase family. Monomer. It depends on Mn(2+) as a cofactor.

It carries out the reaction (2R)-2-phosphoglycerate = (2R)-3-phosphoglycerate. It participates in carbohydrate degradation; glycolysis; pyruvate from D-glyceraldehyde 3-phosphate: step 3/5. Its function is as follows. Catalyzes the interconversion of 2-phosphoglycerate and 3-phosphoglycerate. The sequence is that of 2,3-bisphosphoglycerate-independent phosphoglycerate mutase from Helicobacter pylori (strain ATCC 700392 / 26695) (Campylobacter pylori).